Consider the following 129-residue polypeptide: Cytochrome c oxidase subunit 5B, mitochondrial (129 aa).

Residues 1-31 (MASRLLRGAGALAAQALRARGPSGAAAVRSM) constitute a mitochondrion transit peptide. N6-acetyllysine occurs at positions 68 and 86. Zn(2+) is bound by residues Cys-91, Cys-93, Cys-113, and Cys-116. Lys-121 is subject to N6-acetyllysine.

The protein belongs to the cytochrome c oxidase subunit 5B family. Component of the cytochrome c oxidase (complex IV, CIV), a multisubunit enzyme composed of 14 subunits. The complex is composed of a catalytic core of 3 subunits MT-CO1, MT-CO2 and MT-CO3, encoded in the mitochondrial DNA, and 11 supernumerary subunits COX4I, COX5A, COX5B, COX6A, COX6B, COX6C, COX7A, COX7B, COX7C, COX8 and NDUFA4, which are encoded in the nuclear genome. The complex exists as a monomer or a dimer and forms supercomplexes (SCs) in the inner mitochondrial membrane with NADH-ubiquinone oxidoreductase (complex I, CI) and ubiquinol-cytochrome c oxidoreductase (cytochrome b-c1 complex, complex III, CIII), resulting in different assemblies (supercomplex SCI(1)III(2)IV(1) and megacomplex MCI(2)III(2)IV(2)).

It is found in the mitochondrion inner membrane. It functions in the pathway energy metabolism; oxidative phosphorylation. Its function is as follows. Component of the cytochrome c oxidase, the last enzyme in the mitochondrial electron transport chain which drives oxidative phosphorylation. The respiratory chain contains 3 multisubunit complexes succinate dehydrogenase (complex II, CII), ubiquinol-cytochrome c oxidoreductase (cytochrome b-c1 complex, complex III, CIII) and cytochrome c oxidase (complex IV, CIV), that cooperate to transfer electrons derived from NADH and succinate to molecular oxygen, creating an electrochemical gradient over the inner membrane that drives transmembrane transport and the ATP synthase. Cytochrome c oxidase is the component of the respiratory chain that catalyzes the reduction of oxygen to water. Electrons originating from reduced cytochrome c in the intermembrane space (IMS) are transferred via the dinuclear copper A center (CU(A)) of subunit 2 and heme A of subunit 1 to the active site in subunit 1, a binuclear center (BNC) formed by heme A3 and copper B (CU(B)). The BNC reduces molecular oxygen to 2 water molecules using 4 electrons from cytochrome c in the IMS and 4 protons from the mitochondrial matrix. The sequence is that of Cytochrome c oxidase subunit 5B, mitochondrial (COX5B) from Pongo abelii (Sumatran orangutan).